The sequence spans 441 residues: 3-phosphoshikimate 1-carboxyvinyltransferase (441 aa).

3-phosphoshikimate contacts are provided by lysine 26, serine 27, and arginine 31. Lysine 26 is a phosphoenolpyruvate binding site. Phosphoenolpyruvate-binding residues include glycine 99 and arginine 127. 6 residues coordinate 3-phosphoshikimate: serine 173, serine 174, glutamine 175, serine 203, aspartate 320, and lysine 347. Residue glutamine 175 participates in phosphoenolpyruvate binding. Catalysis depends on aspartate 320, which acts as the Proton acceptor. Phosphoenolpyruvate-binding residues include arginine 351, arginine 393, and lysine 423.

Belongs to the EPSP synthase family. In terms of assembly, monomer.

The protein resides in the cytoplasm. It carries out the reaction 3-phosphoshikimate + phosphoenolpyruvate = 5-O-(1-carboxyvinyl)-3-phosphoshikimate + phosphate. It functions in the pathway metabolic intermediate biosynthesis; chorismate biosynthesis; chorismate from D-erythrose 4-phosphate and phosphoenolpyruvate: step 6/7. Its function is as follows. Catalyzes the transfer of the enolpyruvyl moiety of phosphoenolpyruvate (PEP) to the 5-hydroxyl of shikimate-3-phosphate (S3P) to produce enolpyruvyl shikimate-3-phosphate and inorganic phosphate. This is 3-phosphoshikimate 1-carboxyvinyltransferase from Janthinobacterium sp. (strain Marseille) (Minibacterium massiliensis).